Consider the following 515-residue polypeptide: Anthranilate synthase component 1 (515 aa).

L-tryptophan contacts are provided by residues threonine 40 and 291–293 (PYM). 328–329 (GT) provides a ligand contact to chorismate. Residue glutamate 361 participates in Mg(2+) binding. Residues tyrosine 449, arginine 469, 483–485 (GAG), and glycine 485 each bind chorismate. Mg(2+) is bound at residue glutamate 498.

This sequence belongs to the anthranilate synthase component I family. Heterotetramer consisting of two non-identical subunits: a beta subunit (TrpG) and a large alpha subunit (TrpE). Requires Mg(2+) as cofactor.

It carries out the reaction chorismate + L-glutamine = anthranilate + pyruvate + L-glutamate + H(+). It participates in amino-acid biosynthesis; L-tryptophan biosynthesis; L-tryptophan from chorismate: step 1/5. Feedback inhibited by tryptophan. In terms of biological role, part of a heterotetrameric complex that catalyzes the two-step biosynthesis of anthranilate, an intermediate in the biosynthesis of L-tryptophan. In the first step, the glutamine-binding beta subunit (TrpG) of anthranilate synthase (AS) provides the glutamine amidotransferase activity which generates ammonia as a substrate that, along with chorismate, is used in the second step, catalyzed by the large alpha subunit of AS (TrpE) to produce anthranilate. In the absence of TrpG, TrpE can synthesize anthranilate directly from chorismate and high concentrations of ammonia. In Buchnera aphidicola subsp. Schizaphis graminum (strain Sg), this protein is Anthranilate synthase component 1 (trpE).